A 928-amino-acid polypeptide reads, in one-letter code: MDGFAGSLDDSVSAASTSDVQDRLSALELRVQQQEDEITVLKAALADVLRRLAISEDQVATVRKAVPSKGPATMREALSMSCITNGGAGTRKPSHITSVAKKDTLSSAAKSVKRSSTIEKSHNSWDASEESRNKLMRAASTSKLTSKVAKATDKHKDIVISPEGEYIKMFMRGRPITMFIPSDVENYDDIRTELPPEKLKLEWVFGYRGRDCRANVYLLPTGEIVYFIASVVVLFNYEERTQRHYLGHTDCVKCIAVHPDKIRIATGQIAGVDKDGRPLQPHVRVWDSVSLSTLQVIGLGTFERGVGCLAFSKADSGVHLSVIDDSNEHMLTVWDWQKKSKIAEIKTTNEVVLTVEFHPTDACTIVTCGKSHIFFWTWSGNSLARKQGIFGKYEKPKFVQCLAFLANGDVLAGDSGGVMLIWSKTTVESTASKGAKVLGVYQISRQIKAHDGSVFTLCQMRNGMLLTGGGKDRKVIMWDHDLNPEREIEVPDQYGTIRAVAEGKGDQFLIGTSRNFILRGTFNDGFQVEVQGHTDELWGLATHPFKDLLLTCAQDKQVCLWNSVDHSLEWTRVLDEPGHCADFHPTGTVVAIGTHSGRWFVLDAETRDLVSIHTDGNEQLSVMRYSVDGALLAVGSHDNFIYLYNVSENGRKYSRYGKCTGHSSYITHLDWSPDNQYIMSNSGDYEILYWDIPSGCKLIRNRSDCKDINWATYTCVLGFQVFGVWPEGSDGTDINALVRSHNRKVIALADDFCKVHLFQYPCSKPKAPSHKYSAHSSHVTNVSFTHKDSHLISTGGKDMSIMQWRLIEKVSHSQNDNIVESSSAVNSPVVTEKPLQPNTPTNLPQAVNEVPKEDDKTPAESPVPAEDALEQPEELNEVQSEKCSSQPEGANGQEPSNEVSEDPTDSAAINNTPEDAQDENQDDSSPLS.

A microtubule-binding region spans residues 1 to 189; it reads MDGFAGSLDD…IPSDVENYDD (189 aa). Residues 14 to 63 are a coiled coil; that stretch reads AASTSDVQDRLSALELRVQQQEDEITVLKAALADVLRRLAISEDQVATVR. The tract at residues 107–131 is disordered; the sequence is SAAKSVKRSSTIEKSHNSWDASEES. Positions 116–131 are enriched in basic and acidic residues; the sequence is STIEKSHNSWDASEES. WD repeat units lie at residues 199–237, 241–288, 296–336, 343–378, 385–424, 442–480, 485–521, 524–563, 567–604, 610–646, 653–692, 702–760, and 767–806; these read LKLEWVFGYRGRDCRANVYLLPTGEIVYFIASVVVLFNY, TQRH…VWDS, VIGL…VWDW, AEIKTTNEVVLTVEFHPTDACTIVTCGKSHIFFWTW, RKQGIFGKYEKPKFVQCLAFLANGDVLAGDSGGVMLIWSK, QISRQIKAHDGSVFTLCQMRNGMLLTGGGKDRKVIMWDH, EREIEVPDQYGTIRAVAEGKGDQFLIGTSRNFILRGT, DGFQVEVQGHTDELWGLATHPFKDLLLTCAQDKQVCLWNS, SLEWTRVLDEPGHCADFHPTGTVVAIGTHSGRWFVLDA, VSIHTDGNEQLSVMRYSVDGALLAVGSHDNFIYLYNV, YSRYGKCTGHSSYITHLDWSPDNQYIMSNSGDYEILYWDI, RSDC…LFQY, and APSHKYSAHSSHVTNVSFTHKDSHLISTGGKDMSIMQWRL. The interval 821–928 is disordered; sequence SSSAVNSPVV…ENQDDSSPLS (108 aa). Residues 836 to 845 are compositionally biased toward polar residues; sequence QPNTPTNLPQ. Over residues 867 to 876 the composition is skewed to acidic residues; it reads DALEQPEELN. Over residues 877–898 the composition is skewed to polar residues; that stretch reads EVQSEKCSSQPEGANGQEPSNE.

The protein belongs to the WD repeat EMAP family. In terms of assembly, homotrimer; self-association is mediated by the N-terminal coiled coil.

It is found in the cytoplasm. Its subcellular location is the cytoskeleton. The protein resides in the spindle. The protein localises to the microtubule organizing center. It localises to the midbody. Its function is as follows. Essential for the formation and stability of microtubules (MTs). Required for the organization of the mitotic spindle and for the proper attachment of kinetochores to MTs. Promotes the recruitment of NUDC to the mitotic spindle for mitotic progression. This is Echinoderm microtubule-associated protein-like 4 (eml4) from Xenopus tropicalis (Western clawed frog).